An 84-amino-acid polypeptide reads, in one-letter code: U8-theraphotoxin-Hhn1c 2 (84 aa).

The N-terminal stretch at 1–21 (MKVVLLVCLVWMMAMMELVSC) is a signal peptide. 5 cysteine pairs are disulfide-bonded: Cys23-Cys35, Cys29-Cys44, Cys34-Cys67, Cys54-Cys75, and Cys69-Cys81.

Belongs to the AVIT (prokineticin) family. As to expression, expressed by the venom gland.

The protein resides in the secreted. The sequence is that of U8-theraphotoxin-Hhn1c 2 from Cyriopagopus hainanus (Chinese bird spider).